We begin with the raw amino-acid sequence, 127 residues long: Protein P6 (127 aa).

It localises to the virion membrane. The chain is Protein P6 (VI) from Pseudoalteromonas espejiana (Bacteriophage PM2).